The sequence spans 75 residues: Molt-inhibiting hormone (75 aa).

3 disulfides stabilise this stretch: Cys-7-Cys-44, Cys-24-Cys-40, and Cys-27-Cys-53. Ala-75 is subject to Alanine amide.

The protein belongs to the arthropod CHH/MIH/GIH/VIH hormone family.

It localises to the secreted. Its function is as follows. Inhibits Y-organs where molting hormone (ecdysteroid) is secreted. A molting cycle is initiated when MIH secretion diminishes or stops. In Procambarus clarkii (Red swamp crayfish), this protein is Molt-inhibiting hormone.